A 90-amino-acid polypeptide reads, in one-letter code: UPF0184 protein (90 aa).

Residues 16 to 78 (DETKEEMVEL…QSLETEQNTE (63 aa)) are a coiled coil. Positions 57–90 (SQQARQELQAERQSLETEQNTEPSTKSDQEQKKQ) are disordered. Basic and acidic residues predominate over residues 81-90 (TKSDQEQKKQ).

This sequence belongs to the UPF0184 (EST00098) family.

This chain is UPF0184 protein, found in Branchiostoma floridae (Florida lancelet).